Reading from the N-terminus, the 610-residue chain is Fimbrin (610 aa).

EF-hand domains lie at 7-42 and 43-78; these read SEISEFKASFNQFDENGDGQISALELQKILTKCGEK and VTGVEVRDMIKEVDTDGNGSIDFKEFLQVMQKARQH. D20, N22, D24, Q26, E31, D56, D58, N60, S62, and E67 together coordinate Ca(2+). Actin-binding regions lie at residues 102–365 and 366–608; these read YSGS…NTHP and ALEP…QVEM. 4 consecutive Calponin-homology (CH) domains span residues 116 to 232, 260 to 365, 379 to 488, and 501 to 608; these read DEEK…KIGL, LPVE…NTHP, TREE…RGHV, and PIAD…QVEM.

Functionally, binds to actin. The sequence is that of Fimbrin (fimA) from Dictyostelium discoideum (Social amoeba).